The following is a 198-amino-acid chain: Nucleoid occlusion factor SlmA (198 aa).

Residues 10 to 70 (NRREEILQSL…SLIEFIEDSL (61 aa)) enclose the HTH tetR-type domain. The H-T-H motif DNA-binding region spans 33–52 (TTAKLAASVGVSEAALYRHF). A coiled-coil region spans residues 117–145 (EQDRLQGRINQLFERIEAQLRQVMREKKM).

Belongs to the nucleoid occlusion factor SlmA family. In terms of assembly, homodimer. Interacts with FtsZ.

It localises to the cytoplasm. Its subcellular location is the nucleoid. Its function is as follows. Required for nucleoid occlusion (NO) phenomenon, which prevents Z-ring formation and cell division over the nucleoid. Acts as a DNA-associated cell division inhibitor that binds simultaneously chromosomal DNA and FtsZ, and disrupts the assembly of FtsZ polymers. SlmA-DNA-binding sequences (SBS) are dispersed on non-Ter regions of the chromosome, preventing FtsZ polymerization at these regions. The protein is Nucleoid occlusion factor SlmA of Klebsiella pneumoniae subsp. pneumoniae (strain ATCC 700721 / MGH 78578).